Here is a 1729-residue protein sequence, read N- to C-terminus: 182 kDa tankyrase-1-binding protein (1729 aa).

The span at 1-12 (MKVSTLRESSAM) shows a compositional bias: polar residues. The tract at residues 1-151 (MKVSTLRESS…VRKAPAPFRP (151 aa)) is disordered. The residue at position 14 (serine 14) is a Phosphoserine. The span at 46 to 63 (ALPAKPALPAKPSLLVPV) shows a compositional bias: low complexity. The segment covering 117 to 127 (TGKEEAGKEEP) has biased composition (basic and acidic residues). The residue at position 131 (threonine 131) is a Phosphothreonine. 3 positions are modified to phosphoserine: serine 178, serine 221, and serine 228. Disordered regions lie at residues 184–450 (GSRL…LAAL), 484–603 (PSGL…ESPL), and 657–880 (ETTQ…SSRD). Residues 210–1572 (DEDGSTLFRG…TEILDSAMYR (1363 aa)) form an acidic region. The span at 230–245 (AECREEHSKTPEERSL) shows a compositional bias: basic and acidic residues. Residue threonine 239 is modified to Phosphothreonine. Serine 287 and serine 301 each carry phosphoserine. Low complexity predominate over residues 352 to 363 (PSPGLPAEGAPE). Residues 364 to 374 (APRPSSPPPEV) are compositionally biased toward pro residues. 5 positions are modified to phosphoserine: serine 429, serine 435, serine 437, serine 494, and serine 498. Low complexity-rich tracts occupy residues 500-512 (ITEASEAAEAAEA), 524-541 (VSQQGQGAGSAPSGSGSS), and 572-583 (LPTTEGTPGLPL). Threonine 501 is subject to Phosphothreonine. Phosphoserine is present on residues serine 601, serine 672, serine 691, serine 695, serine 712, serine 724, serine 744, serine 762, and serine 806. The segment covering 738–753 (PQPSSFSPSSWCQGAS) has biased composition (polar residues). The span at 803–812 (ASSSQDQSKV) shows a compositional bias: polar residues. Threonine 833 is modified (phosphothreonine). Residues serine 836, serine 851, serine 872, serine 877, serine 882, and serine 893 each carry the phosphoserine modification. A compositionally biased stretch (basic and acidic residues) spans 858-872 (RDAELQDQEFGKRDS). Tyrosine 897 carries the post-translational modification Phosphotyrosine. The interval 897–1083 (YASQDANEQG…ADLEDGEMGK (187 aa)) is disordered. Residues serine 899, serine 920, serine 936, and serine 976 each carry the phosphoserine modification. A Phosphothreonine modification is found at threonine 979. Phosphoserine occurs at positions 983, 987, 1004, 1008, 1013, 1024, 1029, 1054, 1073, 1091, 1103, 1133, 1138, 1158, 1178, 1248, and 1253. The segment covering 1012 to 1021 (GSRDAGRPGE) has biased composition (basic and acidic residues). Positions 1043–1054 (RDQSSWQNSDAS) are enriched in polar residues. The interval 1240–1302 (EVGEGGGHSQ…GAVCSPGESK (63 aa)) is disordered. Threonine 1282 bears the Phosphothreonine mark. A phosphoserine mark is found at serine 1297, serine 1328, serine 1331, serine 1383, and serine 1385. The tract at residues 1362–1561 (AREHGVGGVS…SPSQDFSFIE (200 aa)) is disordered. A compositionally biased stretch (basic and acidic residues) spans 1389–1400 (EARDPLEARELG). The segment covering 1406-1419 (GPETQGEDYSSSSL) has biased composition (polar residues). Serine 1435, serine 1439, serine 1450, serine 1452, serine 1473, serine 1476, serine 1503, and serine 1506 each carry phosphoserine. Residues 1450-1542 (SGSQGLLEEM…SDQGPAQTSR (93 aa)) form a tankyrase-binding region. Threonine 1518 is subject to Phosphothreonine. Serine 1533, serine 1545, and serine 1558 each carry phosphoserine. Threonine 1563 is modified (phosphothreonine). The interval 1575-1729 (ANLGRKRGHR…QALKLKKKKV (155 aa)) is disordered. Positions 1577–1586 (LGRKRGHRAP) are enriched in basic residues. Residues 1602–1615 (SDAHLFQDSTEPRA) show a composition bias toward basic and acidic residues. Residues serine 1620, serine 1621, and serine 1631 each carry the phosphoserine modification. Positions 1629–1635 (PQSRRTR) match the Nuclear localization signal motif. An N6-methyllysine modification is found at lysine 1644. Serine 1652, serine 1666, and serine 1715 each carry phosphoserine. Residues 1665–1679 (RSAEEGELAESKSSQ) are compositionally biased toward basic and acidic residues. The short motif at 1723–1729 (KLKKKKV) is the Nuclear localization signal element.

Binds to the ANK repeat domain of TNKS1 and TNKS2. Post-translationally, ADP-ribosylated by TNKS1 (in vitro). In terms of tissue distribution, detected in testis, ovary, lung, skeletal muscle, heart, prostate and pancreas, and at very low levels in brain and peripheral blood leukocytes.

It localises to the nucleus. The protein resides in the cytoplasm. It is found in the cytoskeleton. The protein localises to the chromosome. The polypeptide is 182 kDa tankyrase-1-binding protein (TNKS1BP1) (Homo sapiens (Human)).